The sequence spans 494 residues: Trigger factor (494 aa).

Residues 169-254 enclose the PPIase FKBP-type domain; it reads GDRITMDYVG…VKEVAAPADV (86 aa). Residues 441-494 form a disordered region; it reads LAEEEGEAKAETKKAAPKKKAAAKAEAADAGEGEEAAPKKKAAPKKKAADESAE.

This sequence belongs to the FKBP-type PPIase family. Tig subfamily.

It localises to the cytoplasm. It catalyses the reaction [protein]-peptidylproline (omega=180) = [protein]-peptidylproline (omega=0). Functionally, involved in protein export. Acts as a chaperone by maintaining the newly synthesized protein in an open conformation. Functions as a peptidyl-prolyl cis-trans isomerase. The chain is Trigger factor from Rhizobium johnstonii (strain DSM 114642 / LMG 32736 / 3841) (Rhizobium leguminosarum bv. viciae).